Consider the following 402-residue polypeptide: Probable tRNA pseudouridine synthase D (402 aa).

The active-site Nucleophile is the Asp-94. A TRUD domain is found at Tyr-175–Lys-364.

The protein belongs to the pseudouridine synthase TruD family.

The enzyme catalyses uridine(13) in tRNA = pseudouridine(13) in tRNA. Its function is as follows. Could be responsible for synthesis of pseudouridine from uracil-13 in transfer RNAs. This chain is Probable tRNA pseudouridine synthase D, found in Methanococcus aeolicus (strain ATCC BAA-1280 / DSM 17508 / OCM 812 / Nankai-3).